Reading from the N-terminus, the 629-residue chain is Pentatricopeptide repeat-containing protein At1g63150 (629 aa).

16 PPR repeats span residues 46 to 81, 82 to 116, 117 to 151, 152 to 186, 187 to 221, 222 to 256, 257 to 291, 292 to 326, 327 to 361, 362 to 396, 397 to 431, 432 to 466, 467 to 501, 502 to 532, 534 to 568, and 569 to 603; these read ASGD…RPFP, SIVE…GISH, DLYT…GYEP, DIVT…GYKP, DTFT…GCQP, DLVT…RIKA, NVVI…GIRP, NVVT…KINP, NVVT…SIDP, DTIT…DCLP, NIQT…GLVG, NTVT…RVPT, DIMT…EMEL, NIFI…LSIK, DVVT…GTLP, and NSGT…GFVG.

This sequence belongs to the PPR family. P subfamily.

The polypeptide is Pentatricopeptide repeat-containing protein At1g63150 (Arabidopsis thaliana (Mouse-ear cress)).